The sequence spans 452 residues: UDP-N-acetylmuramate--L-alanine ligase (452 aa).

ATP is bound at residue 121–127 (GTHGKTT).

It belongs to the MurCDEF family.

It localises to the cytoplasm. The enzyme catalyses UDP-N-acetyl-alpha-D-muramate + L-alanine + ATP = UDP-N-acetyl-alpha-D-muramoyl-L-alanine + ADP + phosphate + H(+). It functions in the pathway cell wall biogenesis; peptidoglycan biosynthesis. Cell wall formation. The chain is UDP-N-acetylmuramate--L-alanine ligase from Christiangramia forsetii (strain DSM 17595 / CGMCC 1.15422 / KT0803) (Gramella forsetii).